A 468-amino-acid chain; its full sequence is Ribosomal lysine N-methyltransferase 4 (468 aa).

The SET domain occupies 22-302; the sequence is EKIGLNDYRH…KGEQLWNTYG (281 aa). Positions 188-225 are disordered; it reads ISNENEKSAAETSIKEDKNGDAAKKNEGSANQDDEKLH. Position 301 (Y301) interacts with S-adenosyl-L-methionine.

The protein belongs to the class V-like SAM-binding methyltransferase superfamily. Histone-lysine methyltransferase family. SETD6 subfamily.

It localises to the nucleus. S-adenosyl-L-methionine-dependent protein-lysine N-methyltransferase that monomethylates 60S ribosomal protein L42 (rpl42) at 'Lys-55'. The sequence is that of Ribosomal lysine N-methyltransferase 4 from Schizosaccharomyces pombe (strain 972 / ATCC 24843) (Fission yeast).